Reading from the N-terminus, the 169-residue chain is HTH-type transcriptional regulator PchR (169 aa).

The region spanning 10–153 (YDIYVRLLHL…VLKFLEQLTS (144 aa)) is the HTH marR-type domain. Residues 64–87 (NAGIARKMNLSKANVTKISTKLIK) constitute a DNA-binding region (H-T-H motif).

In terms of assembly, homodimer.

Functionally, represses the expression of the yvmC-cypX operon, which is involved in pulcherriminic acid biosynthesis. Also negatively regulates yvmA, yvnB and its own expression. Positively regulates yisI expression. Acts by binding specifically to a 14-bp palindromic motif, the YvmB box, which is present in the promoter region of the target genes. The chain is HTH-type transcriptional regulator PchR from Bacillus subtilis (strain 168).